The chain runs to 116 residues: Ly-6/neurotoxin-like protein 1 (116 aa).

A signal peptide spans 1–20; that stretch reads MTPLLTLILVVLMGLPLAQA. Residues 21–105 form the UPAR/Ly6 domain; the sequence is LDCHVCAYNG…LATPATLALA (85 aa). Intrachain disulfides connect Cys23/Cys46, Cys26/Cys33, Cys39/Cys64, Cys68/Cys85, and Cys86/Cys91. Residue Asn92 is the site of GPI-anchor amidated asparagine attachment. Positions 93–116 are cleaved as a propeptide — removed in mature form; that stretch reads GAGLATPATLALAPILLATLWGLL.

In terms of assembly, interacts with nAChRs containing alpha-4:beta-2 (CHRNA4:CHRNB2) and alpha-7 (CHRNA7) subunits. Interacts with CHRNA4 probably in the endoplasmic reticulum prior to nAChR pentameric assembly. Interacts with KCNA2/Potassium voltage-gated channel subfamily A member 2.

The protein resides in the cell membrane. Its subcellular location is the cell projection. The protein localises to the dendrite. It is found in the endoplasmic reticulum. Functionally, acts in different tissues through interaction to nicotinic acetylcholine receptors (nAChRs). The proposed role as modulator of nAChR activity seems to be dependent on the nAChR subtype and stoichiometry, and to involve an effect on nAChR trafficking and its cell surface expression, and on single channel properties of the nAChR inserted in the plasma membrane. Modulates functional properties of nicotinic acetylcholine receptors (nAChRs) to prevent excessive excitation, and hence neurodegeneration. Enhances desensitization by increasing both the rate and extent of desensitization of alpha-4:beta-2-containing nAChRs and slowing recovery from desensitization. Promotes large amplitude ACh-evoked currents through alpha-4:beta-2 nAChRs. Is involved in regulation of the nAChR pentameric assembly in the endoplasmic reticulum. Shifts stoichiometry from high sensitivity alpha-4(2):beta-2(3) to low sensitivity alpha-4(3):beta-2(2) nAChR. In vitro modulates alpha-3:beta-4-containing nAChRs. Reduces cell surface expression of (alpha-3:beta-4)(2):beta-4 and (alpha-3:beta-4)(2):alpha-5 nAChRs suggesting an interaction with nAChR alpha-3(-):(+)beta-4 subunit interfaces and an allosteric mode. Corresponding single channel effects characterized by decreased unitary conductance, altered burst proportions and enhanced desensitization/inactivation seem to depend on nAChR alpha:alpha subunit interfaces and are greater in (alpha-3:beta-2)(2):alpha-3 when compared to (alpha-3:beta-2)(2):alpha-5 nAChRs. Prevents plasticity in the primary visual cortex late in life. The chain is Ly-6/neurotoxin-like protein 1 from Pan troglodytes (Chimpanzee).